The chain runs to 875 residues: Metal transporter CNNM2 (875 aa).

The Extracellular portion of the chain corresponds to 1-250; sequence MIGCGACEPE…TKMIVGEEKK (250 aa). Asn112 carries an N-linked (GlcNAc...) asparagine glycan. A disordered region spans residues 122-148; the sequence is EHERRRHTPGERGLGGPAPPEPDSGPQ. A helical membrane pass occupies residues 251-271; the sequence is FLLPFWLQVIFISLLLCLSGM. Residues 251–431 form the CNNM transmembrane domain; that stretch reads FLLPFWLQVI…DPYNDLVKEE (181 aa). Topologically, residues 272–313 are cytoplasmic; sequence FSGLNLGLMALDPMELRIVQNCGTEKEKNYAKRIEPVRRQGN. Residues 314 to 334 constitute an intramembrane region (helical); that stretch reads YLLCSLLLGNVLVNTTLTILL. Over 335 to 338 the chain is Cytoplasmic; the sequence is DDIA. Residues 339–359 traverse the membrane as a helical segment; the sequence is GSGLVAVVVSTIGIVIFGEIV. The Extracellular portion of the chain corresponds to 360 to 368; sequence PQAICSRHG. The chain crosses the membrane as a helical span at residues 369-389; sequence LAVGANTIFLTKFFMMMTFPA. Over 390-875 the chain is Cytoplasmic; the sequence is SYPVSKLLDC…NHSLHSEGAI (486 aa). CBS domains lie at 450–511 and 518–584; these read MTPL…CTPL and YNHP…ILDE. Residues 741–763 form a disordered region; the sequence is AGSPGENKSPPRPCGLNHSDSLS. Residue Ser761 is modified to Phosphoserine.

This sequence belongs to the ACDP family.

The protein resides in the cell membrane. Functionally, divalent metal cation transporter. Mediates transport of divalent metal cations in an order of Mg(2+) &gt; Co(2+) &gt; Mn(2+) &gt; Sr(2+) &gt; Ba(2+) &gt; Cu(2+) &gt; Fe(2+). In Rattus norvegicus (Rat), this protein is Metal transporter CNNM2 (Cnnm2).